The following is a 152-amino-acid chain: Nucleoside diphosphate kinase B (152 aa).

An interaction with AKAP13 region spans residues 1-66 (MAHQERTFIA…DRPFYPGLVK (66 aa)). Positions 12, 60, 88, 94, 105, and 115 each coordinate ATP. Catalysis depends on His118, which acts as the Pros-phosphohistidine intermediate.

Belongs to the NDK family. As to quaternary structure, hexamer of two different chains: An and B (A6, A5B, A4B2, A3B3, A2B4, AB5, B6). Interacts with CAPN8. Interacts with AKAP13. Interacts with ITGB1BP1 (via C-terminal domain region). Interacts with BCL2L10. Mg(2+) is required as a cofactor. Ubiquitous.

The protein localises to the cytoplasm. The protein resides in the cell projection. It is found in the lamellipodium. It localises to the ruffle. Its subcellular location is the nucleus. It catalyses the reaction a 2'-deoxyribonucleoside 5'-diphosphate + ATP = a 2'-deoxyribonucleoside 5'-triphosphate + ADP. The catalysed reaction is a ribonucleoside 5'-diphosphate + ATP = a ribonucleoside 5'-triphosphate + ADP. It carries out the reaction ATP + protein L-histidine = ADP + protein N-phospho-L-histidine.. Its function is as follows. Major role in the synthesis of nucleoside triphosphates other than ATP. The ATP gamma phosphate is transferred to the NDP beta phosphate via a ping-pong mechanism, using a phosphorylated active-site intermediate. Negatively regulates Rho activity by interacting with AKAP13/LBC. Acts as a transcriptional activator of the MYC gene; binds DNA non-specifically. Binds to both single-stranded guanine- and cytosine-rich strands within the nuclease hypersensitive element (NHE) III(1) region of the MYC gene promoter. Does not bind to duplex NHE III(1). Has G-quadruplex (G4) DNA-binding activity, which is independent of its nucleotide-binding and kinase activity. Binds both folded and unfolded G4 with similar low nanomolar affinities. Stabilizes folded G4s regardless of whether they are prefolded or not. Exhibits histidine protein kinase activity. The sequence is that of Nucleoside diphosphate kinase B (NME2) from Canis lupus familiaris (Dog).